The sequence spans 24 residues: Pseudin-2 (24 aa).

In terms of tissue distribution, expressed by the skin glands.

The protein localises to the secreted. In terms of biological role, antimicrobial peptide with activity against fungus (C.albicans) and Gram-positive and Gram-negative bacteria (S.aureus and E.coli). Also has low hemolytic activity against human erythrocytes. This chain is Pseudin-2, found in Pseudis paradoxa (Paradoxical frog).